A 250-amino-acid chain; its full sequence is Ditrans,polycis-undecaprenyl-diphosphate synthase ((2E,6E)-farnesyl-diphosphate specific) (250 aa).

Residue Asp-20 is part of the active site. Asp-20 provides a ligand contact to Mg(2+). Substrate contacts are provided by residues 21–24 (GNGR), Trp-25, Arg-33, His-37, and 65–67 (SSE). The active-site Proton acceptor is Asn-68. Residues Trp-69, Arg-71, Arg-188, and 194 to 196 (RIS) each bind substrate. Glu-207 lines the Mg(2+) pocket.

Belongs to the UPP synthase family. As to quaternary structure, homodimer. Requires Mg(2+) as cofactor.

It carries out the reaction 8 isopentenyl diphosphate + (2E,6E)-farnesyl diphosphate = di-trans,octa-cis-undecaprenyl diphosphate + 8 diphosphate. In terms of biological role, catalyzes the sequential condensation of isopentenyl diphosphate (IPP) with (2E,6E)-farnesyl diphosphate (E,E-FPP) to yield (2Z,6Z,10Z,14Z,18Z,22Z,26Z,30Z,34E,38E)-undecaprenyl diphosphate (di-trans,octa-cis-UPP). UPP is the precursor of glycosyl carrier lipid in the biosynthesis of bacterial cell wall polysaccharide components such as peptidoglycan and lipopolysaccharide. In Vibrio cholerae serotype O1 (strain ATCC 39315 / El Tor Inaba N16961), this protein is Ditrans,polycis-undecaprenyl-diphosphate synthase ((2E,6E)-farnesyl-diphosphate specific).